Here is a 610-residue protein sequence, read N- to C-terminus: MKWLKHFQSLHTKLVIVYVLLIIIGMQIIGLYFTNSLEKELTQTFKNNISQYAKQIEINIEKVYDEDNAINAQKEVQNLLNEYANRQEIEEIRFIDKDQIIMATSKQSTRSLINQKANDNSIQKALSLGEINSHTVLKDYGNGKQRVWVYNLPVKTSNDGTIGDVYIEADINDVYNQLSNINQIFIVGTGISLLITVILGFFIARTITKPITDMRNQTVEMSKGNYTQRVKIYGNDEIGELALAFNNLSKRVQEAQANTESEKRRLDSVITHMSDGIIATDRRGRVRIVNDMALTMMGTMKEDIIGDHMLKVLKLEEDFSLDEIQENNDSFLLDINENEGIIARVNFSTIVQETGFVTGYIAVLHDVTEQQQVERERREFVANVSHELRTPLTSMNSYIEALESGAWKDGELAPQFLSVTREETERMIRLVNDLLQLSKMDNESEQITKEIVDFNMFINKIINRHEMSAKDTTFVREVPTETIFTEIDPDKMTQVFDNVITNAMKYSRGDKRVEFHVKQNALYNRMTIRVKDNGIGIPINKVDKIFDRFYRVDKARTRKMGGTGLGLAISKEIVEAHNGRIWANSVEGQGTSIFITLPCEVLEDGDWDAE.

2 helical membrane passes run 14–34 (LVIV…LYFT) and 184–204 (IFIV…FFIA). The region spanning 205–257 (RTITKPITDMRNQTVEMSKGNYTQRVKIYGNDEIGELALAFNNLSKRVQEAQA) is the HAMP domain. The 72-residue stretch at 262 to 333 (EKRRLDSVIT…IQENNDSFLL (72 aa)) folds into the PAS domain. A PAC domain is found at 326–379 (ENNDSFLLDINENEGIIARVNFSTIVQETGFVTGYIAVLHDVTEQQQVERERRE). One can recognise a Histidine kinase domain in the interval 383–601 (NVSHELRTPL…SIFITLPCEV (219 aa)). The residue at position 386 (H386) is a Phosphohistidine; by autocatalysis.

In terms of processing, autophosphorylated.

The protein localises to the cell membrane. It catalyses the reaction ATP + protein L-histidine = ADP + protein N-phospho-L-histidine.. Member of the two-component regulatory system WalK/WalR. WalK functions as a sensor protein kinase which is autophosphorylated at a histidine residue and transfers its phosphate group to WalR. This chain is Sensor protein kinase WalK (walK), found in Staphylococcus saprophyticus subsp. saprophyticus (strain ATCC 15305 / DSM 20229 / NCIMB 8711 / NCTC 7292 / S-41).